The sequence spans 98 residues: Acylphosphatase (98 aa).

One can recognise an Acylphosphatase-like domain in the interval 12–98 (TYYVRVRGVV…ERRFERFQQQ (87 aa)). Catalysis depends on residues Arg27 and Asn45.

Belongs to the acylphosphatase family.

It carries out the reaction an acyl phosphate + H2O = a carboxylate + phosphate + H(+). The polypeptide is Acylphosphatase (acyP) (Burkholderia vietnamiensis (strain G4 / LMG 22486) (Burkholderia cepacia (strain R1808))).